The chain runs to 342 residues: Glycerol-3-phosphate dehydrogenase [NAD(P)+] (342 aa).

Residues S13, W14, and K108 each coordinate NADPH. Sn-glycerol 3-phosphate is bound by residues K108, G139, and S141. A143 provides a ligand contact to NADPH. Residues K194, D247, S257, R258, and N259 each coordinate sn-glycerol 3-phosphate. K194 functions as the Proton acceptor in the catalytic mechanism. An NADPH-binding site is contributed by R258. V282 and E284 together coordinate NADPH.

Belongs to the NAD-dependent glycerol-3-phosphate dehydrogenase family.

It is found in the cytoplasm. It catalyses the reaction sn-glycerol 3-phosphate + NAD(+) = dihydroxyacetone phosphate + NADH + H(+). The catalysed reaction is sn-glycerol 3-phosphate + NADP(+) = dihydroxyacetone phosphate + NADPH + H(+). Its pathway is membrane lipid metabolism; glycerophospholipid metabolism. Functionally, catalyzes the reduction of the glycolytic intermediate dihydroxyacetone phosphate (DHAP) to sn-glycerol 3-phosphate (G3P), the key precursor for phospholipid synthesis. This chain is Glycerol-3-phosphate dehydrogenase [NAD(P)+], found in Lactococcus lactis subsp. cremoris (strain SK11).